A 626-amino-acid chain; its full sequence is DNA mismatch repair protein MutL (626 aa).

The protein belongs to the DNA mismatch repair MutL/HexB family.

This protein is involved in the repair of mismatches in DNA. It is required for dam-dependent methyl-directed DNA mismatch repair. May act as a 'molecular matchmaker', a protein that promotes the formation of a stable complex between two or more DNA-binding proteins in an ATP-dependent manner without itself being part of a final effector complex. The protein is DNA mismatch repair protein MutL of Pelodictyon phaeoclathratiforme (strain DSM 5477 / BU-1).